We begin with the raw amino-acid sequence, 260 residues long: Protein FAM220A (260 aa).

Disordered regions lie at residues 1–75 and 129–158; these read MKAG…SKAS and GSDW…GRPG. The span at 35-47 shows a compositional bias: polar residues; that stretch reads RNPSPSVVPSWTD.

As to quaternary structure, interacts with transcriptional activator STAT3; the interaction occurs in both the nucleus and the cytoplasm, is enhanced by IL6 and promotes STAT3 dephosphorylation, leading to negative regulation of STAT3 transcriptional activator activity. Can interact with both unphosphorylated and phosphorylated STAT3 but interacts preferentially with phosphorylated STAT3 in the nucleus. Interacts with protein phosphatase PTPN2/TC45; this promotes interaction of PTPN2 with STAT3, leading to dephosphorylation of STAT3 by PTPN2. In terms of tissue distribution, expressed at high levels in the testis where it is detected within elongated spermatids during the late stages (steps 9-16) of haploid germ cell development and in the tubular lumen (at protein level).

Its subcellular location is the nucleus. The protein resides in the cytoplasm. The protein localises to the cytoplasmic vesicle. It localises to the secretory vesicle. It is found in the acrosome. Functionally, promotes dephosphorylation of transcriptional activator STAT3 by interacting with both STAT3 and protein phosphatase PTPN2. This promotes interaction of PTPN2 with STAT3 and mediates STAT3 dephosphorylation by PTPN2, leading to negative regulation of STAT3 transcriptional activator activity. May be required for spermiogenesis or sperm function. This is Protein FAM220A from Mus musculus (Mouse).